Here is a 180-residue protein sequence, read N- to C-terminus: Oligoribonuclease (180 aa).

Residues 7–170 enclose the Exonuclease domain; that stretch reads LIWIDLEMTG…DDIRESLAEL (164 aa). Residue Y128 is part of the active site.

The protein belongs to the oligoribonuclease family.

It is found in the cytoplasm. Its function is as follows. 3'-to-5' exoribonuclease specific for small oligoribonucleotides. The sequence is that of Oligoribonuclease from Pectobacterium atrosepticum (strain SCRI 1043 / ATCC BAA-672) (Erwinia carotovora subsp. atroseptica).